The primary structure comprises 268 residues: Lipopolysaccharide core heptose(I) kinase WaaP (268 aa).

Phosphotyrosine; by autocatalysis occurs at positions 30, 48, and 98. The active site involves Asp163. Residues Tyr165, Tyr211, Tyr231, Tyr258, and Tyr264 each carry the phosphotyrosine; by autocatalysis modification.

It belongs to the protein kinase superfamily. KdkA/RfaP family. In terms of assembly, interacts with acyl-AcpP. The WaaP hydrophobic channel can accommodate acyl chains of different lengths, but myristyl-ACP is likely its physiological binding partner. Mg(2+) is required as a cofactor.

It localises to the cytoplasm. It catalyses the reaction an L-alpha-D-Hep-(1-&gt;3)-L-alpha-D-Hep-(1-&gt;5)-[alpha-Kdo-(2-&gt;4)]-alpha-Kdo-(2-&gt;6)-lipid A + ATP = an L-alpha-D-Hep-(1-&gt;3)-4-O-phospho-L-alpha-D-Hep-(1-&gt;5)-[alpha-Kdo-(2-&gt;4)]-alpha-Kdo-(2-&gt;6)-lipid A + ADP + H(+). The catalysed reaction is L-tyrosyl-[protein] + ATP = O-phospho-L-tyrosyl-[protein] + ADP + H(+). It functions in the pathway bacterial outer membrane biogenesis; LPS core biosynthesis. With respect to regulation, acylated-acyl carrier protein (acyl-ACP) acts as a very tightly bound cofactor necessary for the production and stability of active WaaP kinase. Functionally, kinase involved in the biosynthesis of the core oligosaccharide region of lipopolysaccharide (LPS). Catalyzes the phosphorylation of heptose I (HepI), the first heptose added to the Kdo2-lipid A module. Also has protein-tyrosine kinase activity: autophosphorylates on all Tyr residues; in vitro can phosphorylate poly(Glu,Tyr). The polypeptide is Lipopolysaccharide core heptose(I) kinase WaaP (Pseudomonas aeruginosa (strain ATCC 15692 / DSM 22644 / CIP 104116 / JCM 14847 / LMG 12228 / 1C / PRS 101 / PAO1)).